Here is a 101-residue protein sequence, read N- to C-terminus: Small ribosomal subunit protein uS14 (101 aa).

The protein belongs to the universal ribosomal protein uS14 family. In terms of assembly, part of the 30S ribosomal subunit. Contacts proteins S3 and S10.

In terms of biological role, binds 16S rRNA, required for the assembly of 30S particles and may also be responsible for determining the conformation of the 16S rRNA at the A site. This is Small ribosomal subunit protein uS14 from Cellvibrio japonicus (strain Ueda107) (Pseudomonas fluorescens subsp. cellulosa).